We begin with the raw amino-acid sequence, 176 residues long: MTTTTEFPSATAKARFVRVSPRKARRVIDLVRGRSVSDALDILRWAPQAASEPVAKVIASAAANAQNNNGLDPATLIVATVYADEGPTAKRIRPRAQGRAFRIRKRTSHITVVVESRPSKDQRSSKSSRARRAEGSKAAATAPAKKSSASKAPAKKAATKAESKTSETSEAKGGSD.

Positions 113 to 176 are disordered; sequence VVESRPSKDQ…ETSEAKGGSD (64 aa). A compositionally biased stretch (low complexity) spans 136 to 152; it reads SKAAATAPAKKSSASKA. A compositionally biased stretch (basic and acidic residues) spans 159 to 176; sequence TKAESKTSETSEAKGGSD.

This sequence belongs to the universal ribosomal protein uL22 family. In terms of assembly, part of the 50S ribosomal subunit.

In terms of biological role, this protein binds specifically to 23S rRNA; its binding is stimulated by other ribosomal proteins, e.g. L4, L17, and L20. It is important during the early stages of 50S assembly. It makes multiple contacts with different domains of the 23S rRNA in the assembled 50S subunit and ribosome. Its function is as follows. The globular domain of the protein is located near the polypeptide exit tunnel on the outside of the subunit, while an extended beta-hairpin is found that lines the wall of the exit tunnel in the center of the 70S ribosome. This is Large ribosomal subunit protein uL22 from Mycobacterium marinum (strain ATCC BAA-535 / M).